Consider the following 349-residue polypeptide: Single-stranded TG1-3 DNA-binding protein (349 aa).

Positions 45–127 (FRVFVGRLST…REIVVQKARP (83 aa)) constitute an RRM 1 domain. Disordered stretches follow at residues 121 to 208 (VVQK…PNSI) and 298 to 349 (EDKQ…AITA). Ser-152 is modified (phosphoserine). The segment covering 168–179 (ANTATAPSSNEA) has biased composition (polar residues). The segment covering 181-191 (GVDKKQNEIKG) has biased composition (basic and acidic residues). The RRM 2 domain maps to 206–296 (NSIYVSGLSV…LTLVVKSAVF (91 aa)). 2 stretches are compositionally biased toward basic and acidic residues: residues 298–310 (EDKQ…KNEN) and 327–340 (TEPK…EEKS).

It is found in the cytoplasm. The protein resides in the nucleus. The protein localises to the chromosome. Its subcellular location is the telomere. In terms of biological role, binds single-stranded telomeric sequences of the type (TG[1-3])n in vitro. Has a role in meiosis. This chain is Single-stranded TG1-3 DNA-binding protein (tcg1), found in Schizosaccharomyces pombe (strain 972 / ATCC 24843) (Fission yeast).